The primary structure comprises 276 residues: Bifunctional protein FolD (276 aa).

NADP(+)-binding positions include 157–159, Ser-182, and Ile-223; that span reads NRS.

Belongs to the tetrahydrofolate dehydrogenase/cyclohydrolase family. Homodimer.

The enzyme catalyses (6R)-5,10-methylene-5,6,7,8-tetrahydrofolate + NADP(+) = (6R)-5,10-methenyltetrahydrofolate + NADPH. It carries out the reaction (6R)-5,10-methenyltetrahydrofolate + H2O = (6R)-10-formyltetrahydrofolate + H(+). It functions in the pathway one-carbon metabolism; tetrahydrofolate interconversion. In terms of biological role, catalyzes the oxidation of 5,10-methylenetetrahydrofolate to 5,10-methenyltetrahydrofolate and then the hydrolysis of 5,10-methenyltetrahydrofolate to 10-formyltetrahydrofolate. This chain is Bifunctional protein FolD, found in Thermoplasma acidophilum (strain ATCC 25905 / DSM 1728 / JCM 9062 / NBRC 15155 / AMRC-C165).